The sequence spans 230 residues: Ribonuclease 3 (230 aa).

Residues 5 to 125 form the RNase III domain; the sequence is YSRFYNILGY…VIGAIYLDSD (121 aa). Glu40 is a binding site for Mg(2+). Residue Asp44 is part of the active site. Residues Asp111 and Glu114 each contribute to the Mg(2+) site. Residue Glu114 is part of the active site. In terms of domain architecture, DRBM spans 153–223; that stretch reads DSKSKLQEIL…AEKMIEMLSQ (71 aa).

The protein belongs to the ribonuclease III family. In terms of assembly, homodimer. Mg(2+) serves as cofactor.

It localises to the cytoplasm. It catalyses the reaction Endonucleolytic cleavage to 5'-phosphomonoester.. Its function is as follows. Digests double-stranded RNA. Involved in the processing of primary rRNA transcript to yield the immediate precursors to the large and small rRNAs (23S and 16S). Processes some mRNAs, and tRNAs when they are encoded in the rRNA operon. Processes pre-crRNA and tracrRNA of type II CRISPR loci if present in the organism. The protein is Ribonuclease 3 of Francisella tularensis subsp. tularensis (strain FSC 198).